The chain runs to 286 residues: Phosphatidylserine decarboxylase proenzyme (286 aa).

Catalysis depends on charge relay system; for autoendoproteolytic cleavage activity residues Asp-88, His-145, and Ser-251. The active-site Schiff-base intermediate with substrate; via pyruvic acid; for decarboxylase activity is the Ser-251. The residue at position 251 (Ser-251) is a Pyruvic acid (Ser); by autocatalysis.

The protein belongs to the phosphatidylserine decarboxylase family. PSD-B subfamily. Prokaryotic type I sub-subfamily. Heterodimer of a large membrane-associated beta subunit and a small pyruvoyl-containing alpha subunit. Pyruvate is required as a cofactor. Post-translationally, is synthesized initially as an inactive proenzyme. Formation of the active enzyme involves a self-maturation process in which the active site pyruvoyl group is generated from an internal serine residue via an autocatalytic post-translational modification. Two non-identical subunits are generated from the proenzyme in this reaction, and the pyruvate is formed at the N-terminus of the alpha chain, which is derived from the carboxyl end of the proenzyme. The autoendoproteolytic cleavage occurs by a canonical serine protease mechanism, in which the side chain hydroxyl group of the serine supplies its oxygen atom to form the C-terminus of the beta chain, while the remainder of the serine residue undergoes an oxidative deamination to produce ammonia and the pyruvoyl prosthetic group on the alpha chain. During this reaction, the Ser that is part of the protease active site of the proenzyme becomes the pyruvoyl prosthetic group, which constitutes an essential element of the active site of the mature decarboxylase.

The protein localises to the cell membrane. It carries out the reaction a 1,2-diacyl-sn-glycero-3-phospho-L-serine + H(+) = a 1,2-diacyl-sn-glycero-3-phosphoethanolamine + CO2. The protein operates within phospholipid metabolism; phosphatidylethanolamine biosynthesis; phosphatidylethanolamine from CDP-diacylglycerol: step 2/2. In terms of biological role, catalyzes the formation of phosphatidylethanolamine (PtdEtn) from phosphatidylserine (PtdSer). This Verminephrobacter eiseniae (strain EF01-2) protein is Phosphatidylserine decarboxylase proenzyme.